The chain runs to 91 residues: Small ribosomal subunit protein uS19 (91 aa).

Belongs to the universal ribosomal protein uS19 family.

Its function is as follows. Protein S19 forms a complex with S13 that binds strongly to the 16S ribosomal RNA. The protein is Small ribosomal subunit protein uS19 of Marinomonas sp. (strain MWYL1).